Here is a 243-residue protein sequence, read N- to C-terminus: UPF0246 protein M28_Spy1772 (243 aa).

Belongs to the UPF0246 family.

The chain is UPF0246 protein M28_Spy1772 from Streptococcus pyogenes serotype M28 (strain MGAS6180).